A 224-amino-acid chain; its full sequence is Small ribosomal subunit protein uS13 (224 aa).

Positions 1–17 are enriched in basic and acidic residues; that stretch reads MSEKTDKTEKKQKKAEE. Disordered stretches follow at residues 1 to 64 and 184 to 224; these read MSEK…AEEK and HERG…EDKK. 2 stretches are compositionally biased toward low complexity: residues 20–30 and 38–47; these read ETASAEAAPAK and AKPAEGAPAD. Positions 210 to 224 are enriched in basic and acidic residues; it reads KKGEQGGAAKKEDKK.

Belongs to the universal ribosomal protein uS13 family. Part of the 30S ribosomal subunit. Forms a loose heterodimer with protein S19. Forms two bridges to the 50S subunit in the 70S ribosome.

Functionally, located at the top of the head of the 30S subunit, it contacts several helices of the 16S rRNA. In the 70S ribosome it contacts the 23S rRNA (bridge B1a) and protein L5 of the 50S subunit (bridge B1b), connecting the 2 subunits; these bridges are implicated in subunit movement. This is Small ribosomal subunit protein uS13 from Methanocella arvoryzae (strain DSM 22066 / NBRC 105507 / MRE50).